The primary structure comprises 444 residues: Na(+)/H(+) antiporter NhaA (444 aa).

Helical transmembrane passes span 27 to 47, 72 to 92, 108 to 128, 136 to 156, 167 to 187, 190 to 210, 212 to 232, 312 to 332, 349 to 369, 385 to 405, and 419 to 439; these read TTGL…NSPL, IHHW…GLEI, MLPI…YYAI, AGWG…LVLL, FLVA…ALFY, EINM…VSFN, FGIH…LFML, HLPV…GVSI, VMAG…YLAI, VFGV…IAEL, and IGIL…LRFI.

It belongs to the NhaA Na(+)/H(+) (TC 2.A.33) antiporter family.

The protein localises to the cell inner membrane. The enzyme catalyses Na(+)(in) + 2 H(+)(out) = Na(+)(out) + 2 H(+)(in). In terms of biological role, na(+)/H(+) antiporter that extrudes sodium in exchange for external protons. The chain is Na(+)/H(+) antiporter NhaA from Sulfurimonas denitrificans (strain ATCC 33889 / DSM 1251) (Thiomicrospira denitrificans (strain ATCC 33889 / DSM 1251)).